Here is a 162-residue protein sequence, read N- to C-terminus: ATP synthase subunit b (162 aa).

Residues 10–29 (LIWTIINFAVLLWGMHRFLY) form a helical membrane-spanning segment.

This sequence belongs to the ATPase B chain family. F-type ATPases have 2 components, F(1) - the catalytic core - and F(0) - the membrane proton channel. F(1) has five subunits: alpha(3), beta(3), gamma(1), delta(1), epsilon(1). F(0) has three main subunits: a(1), b(2) and c(10-14). The alpha and beta chains form an alternating ring which encloses part of the gamma chain. F(1) is attached to F(0) by a central stalk formed by the gamma and epsilon chains, while a peripheral stalk is formed by the delta and b chains.

The protein localises to the cell membrane. F(1)F(0) ATP synthase produces ATP from ADP in the presence of a proton or sodium gradient. F-type ATPases consist of two structural domains, F(1) containing the extramembraneous catalytic core and F(0) containing the membrane proton channel, linked together by a central stalk and a peripheral stalk. During catalysis, ATP synthesis in the catalytic domain of F(1) is coupled via a rotary mechanism of the central stalk subunits to proton translocation. Its function is as follows. Component of the F(0) channel, it forms part of the peripheral stalk, linking F(1) to F(0). The polypeptide is ATP synthase subunit b (Symbiobacterium thermophilum (strain DSM 24528 / JCM 14929 / IAM 14863 / T)).